The sequence spans 197 residues: Probable GTP-binding protein EngB (197 aa).

The EngB-type G domain occupies 26–197 (ELPEIALAGR…EAWDAILEKL (172 aa)). Residues 34–41 (GRSNVGKS), 61–65 (GKTQL), 79–82 (DVPG), 146–149 (TKAD), and 178–180 (FSS) each bind GTP. Mg(2+) contacts are provided by Ser41 and Thr63.

This sequence belongs to the TRAFAC class TrmE-Era-EngA-EngB-Septin-like GTPase superfamily. EngB GTPase family. Mg(2+) is required as a cofactor.

In terms of biological role, necessary for normal cell division and for the maintenance of normal septation. This chain is Probable GTP-binding protein EngB, found in Streptococcus pneumoniae (strain CGSP14).